The chain runs to 617 residues: Probable Xaa-Pro aminopeptidase P (617 aa).

Residues Asp-414, Asp-425, Glu-523, and Glu-537 each coordinate Mn(2+).

Belongs to the peptidase M24B family. Requires Mn(2+) as cofactor.

The enzyme catalyses Release of any N-terminal amino acid, including proline, that is linked to proline, even from a dipeptide or tripeptide.. Functionally, catalyzes the removal of a penultimate prolyl residue from the N-termini of peptides. In Ajellomyces dermatitidis (strain ER-3 / ATCC MYA-2586) (Blastomyces dermatitidis), this protein is Probable Xaa-Pro aminopeptidase P (AMPP).